The sequence spans 292 residues: Mitochondrial fission regulator 1-like (292 aa).

Thr30 carries the post-translational modification Phosphothreonine. Ser41 bears the Phosphoserine mark. Phosphoserine; by AMPK is present on Ser103. Ser110, Ser224, and Ser225 each carry phosphoserine. Ser238 carries the post-translational modification Phosphoserine; by AMPK. A phosphoserine mark is found at Ser261 and Ser273.

This sequence belongs to the MTFR1 family. Phosphorylated by AMPK. Upon stress, phosphorylation at Ser-103 and Ser-238 by AMPK is sufficient to induce mitochondrial fragmentation.

It localises to the mitochondrion outer membrane. Its function is as follows. Mitochondrial protein required for adaptation of miochondrial dynamics to metabolic changes. Regulates mitochondrial morphology at steady state and mediates AMPK-dependent stress-induced mitochondrial fragmentation via the control of OPA1 levels. The sequence is that of Mitochondrial fission regulator 1-like from Homo sapiens (Human).